The chain runs to 85 residues: UPF0297 protein CLL_A1175 (85 aa).

It belongs to the UPF0297 family.

This Clostridium botulinum (strain Eklund 17B / Type B) protein is UPF0297 protein CLL_A1175.